The sequence spans 213 residues: Ribonuclease HII (213 aa).

In terms of domain architecture, RNase H type-2 spans 25–213 (KTLCGVDEAG…FKPVKQLLPH (189 aa)). Positions 31, 32, and 124 each coordinate a divalent metal cation.

Belongs to the RNase HII family. The cofactor is Mn(2+). Requires Mg(2+) as cofactor.

The protein localises to the cytoplasm. The catalysed reaction is Endonucleolytic cleavage to 5'-phosphomonoester.. Its function is as follows. Endonuclease that specifically degrades the RNA of RNA-DNA hybrids. In Magnetococcus marinus (strain ATCC BAA-1437 / JCM 17883 / MC-1), this protein is Ribonuclease HII.